The primary structure comprises 174 residues: 3-hydroxydecanoyl-[acyl-carrier-protein] dehydratase (174 aa).

The active site involves His-73.

The protein belongs to the thioester dehydratase family. FabA subfamily. Homodimer.

It localises to the cytoplasm. It catalyses the reaction a (3R)-hydroxyacyl-[ACP] = a (2E)-enoyl-[ACP] + H2O. The catalysed reaction is (3R)-hydroxydecanoyl-[ACP] = (2E)-decenoyl-[ACP] + H2O. The enzyme catalyses (2E)-decenoyl-[ACP] = (3Z)-decenoyl-[ACP]. It participates in lipid metabolism; fatty acid biosynthesis. Functionally, necessary for the introduction of cis unsaturation into fatty acids. Catalyzes the dehydration of (3R)-3-hydroxydecanoyl-ACP to E-(2)-decenoyl-ACP and then its isomerization to Z-(3)-decenoyl-ACP. Can catalyze the dehydratase reaction for beta-hydroxyacyl-ACPs with saturated chain lengths up to 16:0, being most active on intermediate chain length. In Saccharophagus degradans (strain 2-40 / ATCC 43961 / DSM 17024), this protein is 3-hydroxydecanoyl-[acyl-carrier-protein] dehydratase.